Reading from the N-terminus, the 242-residue chain is Uridylate kinase (242 aa).

11–14 contacts ATP; sequence KLSG. An involved in allosteric activation by GTP region spans residues 19 to 24; the sequence is GNMGYG. Residue Gly53 participates in UMP binding. The ATP site is built by Gly54 and Arg58. UMP contacts are provided by residues Asp73 and 134 to 141; that span reads SGNPFFTT. ATP contacts are provided by Thr161, Tyr167, and Asp170.

Belongs to the UMP kinase family. Homohexamer.

The protein localises to the cytoplasm. It carries out the reaction UMP + ATP = UDP + ADP. The protein operates within pyrimidine metabolism; CTP biosynthesis via de novo pathway; UDP from UMP (UMPK route): step 1/1. Its activity is regulated as follows. Allosterically activated by GTP. Inhibited by UTP. In terms of biological role, catalyzes the reversible phosphorylation of UMP to UDP. This chain is Uridylate kinase, found in Trichormus variabilis (strain ATCC 29413 / PCC 7937) (Anabaena variabilis).